A 227-amino-acid polypeptide reads, in one-letter code: Triosephosphate isomerase (227 aa).

A substrate-binding site is contributed by 6–8 (NLK). The Electrophile role is filled by His-85. The active-site Proton acceptor is the Glu-152. 2 residues coordinate substrate: Gly-158 and Ser-188.

The protein belongs to the triosephosphate isomerase family. As to quaternary structure, homodimer.

The protein localises to the cytoplasm. It catalyses the reaction D-glyceraldehyde 3-phosphate = dihydroxyacetone phosphate. It participates in carbohydrate biosynthesis; gluconeogenesis. It functions in the pathway carbohydrate degradation; glycolysis; D-glyceraldehyde 3-phosphate from glycerone phosphate: step 1/1. Its function is as follows. Involved in the gluconeogenesis. Catalyzes stereospecifically the conversion of dihydroxyacetone phosphate (DHAP) to D-glyceraldehyde-3-phosphate (G3P). The polypeptide is Triosephosphate isomerase (Campylobacter concisus (strain 13826)).